Here is a 336-residue protein sequence, read N- to C-terminus: Ketol-acid reductoisomerase (NADP(+)) (336 aa).

In terms of domain architecture, KARI N-terminal Rossmann spans 2–182 (AKIYYQQDCN…GGARAGVLET (181 aa)). NADP(+) contacts are provided by residues 25 to 28 (YGSQ), S51, S53, and 83 to 86 (DEKQ). H108 is a catalytic residue. G134 serves as a coordination point for NADP(+). Residues 183 to 328 (TFREETETDL…AELRGLMSWT (146 aa)) form the KARI C-terminal knotted domain. Residues D191, E195, E227, and E231 each contribute to the Mg(2+) site. A substrate-binding site is contributed by S252.

This sequence belongs to the ketol-acid reductoisomerase family. It depends on Mg(2+) as a cofactor.

The enzyme catalyses (2R)-2,3-dihydroxy-3-methylbutanoate + NADP(+) = (2S)-2-acetolactate + NADPH + H(+). The catalysed reaction is (2R,3R)-2,3-dihydroxy-3-methylpentanoate + NADP(+) = (S)-2-ethyl-2-hydroxy-3-oxobutanoate + NADPH + H(+). It functions in the pathway amino-acid biosynthesis; L-isoleucine biosynthesis; L-isoleucine from 2-oxobutanoate: step 2/4. The protein operates within amino-acid biosynthesis; L-valine biosynthesis; L-valine from pyruvate: step 2/4. In terms of biological role, involved in the biosynthesis of branched-chain amino acids (BCAA). Catalyzes an alkyl-migration followed by a ketol-acid reduction of (S)-2-acetolactate (S2AL) to yield (R)-2,3-dihydroxy-isovalerate. In the isomerase reaction, S2AL is rearranged via a Mg-dependent methyl migration to produce 3-hydroxy-3-methyl-2-ketobutyrate (HMKB). In the reductase reaction, this 2-ketoacid undergoes a metal-dependent reduction by NADPH to yield (R)-2,3-dihydroxy-isovalerate. This is Ketol-acid reductoisomerase (NADP(+)) from Lachnoclostridium phytofermentans (strain ATCC 700394 / DSM 18823 / ISDg) (Clostridium phytofermentans).